The chain runs to 423 residues: 3-isopropylmalate dehydratase large subunit 1 (423 aa).

[4Fe-4S] cluster is bound by residues C302, C362, and C365.

This sequence belongs to the aconitase/IPM isomerase family. LeuC type 2 subfamily. Heterodimer of LeuC and LeuD. It depends on [4Fe-4S] cluster as a cofactor.

It carries out the reaction (2R,3S)-3-isopropylmalate = (2S)-2-isopropylmalate. The protein operates within amino-acid biosynthesis; L-leucine biosynthesis; L-leucine from 3-methyl-2-oxobutanoate: step 2/4. Catalyzes the isomerization between 2-isopropylmalate and 3-isopropylmalate, via the formation of 2-isopropylmaleate. The protein is 3-isopropylmalate dehydratase large subunit 1 of Pyrococcus abyssi (strain GE5 / Orsay).